The primary structure comprises 329 residues: Flotillin-like protein FloA (329 aa).

A run of 2 helical transmembrane segments spans residues 6–26 (FIVI…FVPI) and 27–47 (GLWI…LVGM).

This sequence belongs to the flotillin-like FloA family. Homooligomerizes.

It is found in the cell membrane. The protein resides in the membrane raft. Its function is as follows. Found in functional membrane microdomains (FMM) that may be equivalent to eukaryotic membrane rafts. FMMs are highly dynamic and increase in number as cells age. Flotillins are thought to be important factors in membrane fluidity. This Staphylococcus aureus (strain USA300) protein is Flotillin-like protein FloA.